Consider the following 446-residue polypeptide: Bifunctional protein GlmU (446 aa).

The tract at residues 1–226 is pyrophosphorylase; it reads MLAIAILAAG…PFEIKGINDR (226 aa). UDP-N-acetyl-alpha-D-glucosamine contacts are provided by residues 7–10, lysine 21, glutamine 73, and 78–79; these read LAAG and GT. Aspartate 103 lines the Mg(2+) pocket. Residues glycine 140, glutamate 155, asparagine 170, and asparagine 224 each contribute to the UDP-N-acetyl-alpha-D-glucosamine site. Asparagine 224 contacts Mg(2+). The linker stretch occupies residues 227–247; that stretch reads VQLSECEHYIQEELKSLWMSK. An N-acetyltransferase region spans residues 248 to 446; it reads GVSFVDPISC…SKAIIRTKAD (199 aa). Residues arginine 329 and lysine 347 each contribute to the UDP-N-acetyl-alpha-D-glucosamine site. Histidine 359 functions as the Proton acceptor in the catalytic mechanism. Residues tyrosine 362 and asparagine 373 each coordinate UDP-N-acetyl-alpha-D-glucosamine. The acetyl-CoA site is built by alanine 376, alanine 419, and arginine 436.

The protein in the N-terminal section; belongs to the N-acetylglucosamine-1-phosphate uridyltransferase family. It in the C-terminal section; belongs to the transferase hexapeptide repeat family. As to quaternary structure, homotrimer. Requires Mg(2+) as cofactor.

The protein localises to the cytoplasm. It catalyses the reaction alpha-D-glucosamine 1-phosphate + acetyl-CoA = N-acetyl-alpha-D-glucosamine 1-phosphate + CoA + H(+). The catalysed reaction is N-acetyl-alpha-D-glucosamine 1-phosphate + UTP + H(+) = UDP-N-acetyl-alpha-D-glucosamine + diphosphate. The protein operates within nucleotide-sugar biosynthesis; UDP-N-acetyl-alpha-D-glucosamine biosynthesis; N-acetyl-alpha-D-glucosamine 1-phosphate from alpha-D-glucosamine 6-phosphate (route II): step 2/2. It participates in nucleotide-sugar biosynthesis; UDP-N-acetyl-alpha-D-glucosamine biosynthesis; UDP-N-acetyl-alpha-D-glucosamine from N-acetyl-alpha-D-glucosamine 1-phosphate: step 1/1. Its pathway is bacterial outer membrane biogenesis; LPS lipid A biosynthesis. Its function is as follows. Catalyzes the last two sequential reactions in the de novo biosynthetic pathway for UDP-N-acetylglucosamine (UDP-GlcNAc). The C-terminal domain catalyzes the transfer of acetyl group from acetyl coenzyme A to glucosamine-1-phosphate (GlcN-1-P) to produce N-acetylglucosamine-1-phosphate (GlcNAc-1-P), which is converted into UDP-GlcNAc by the transfer of uridine 5-monophosphate (from uridine 5-triphosphate), a reaction catalyzed by the N-terminal domain. The protein is Bifunctional protein GlmU of Prochlorococcus marinus (strain NATL2A).